The chain runs to 353 residues: MTQRKIIHIDCDCFYAAIEMRDEPELAGKPLAVGGSAERRGVIATCNYEARAYGVRSAMSSRHALKLCPDLTIVKPRMEAYKEASREIHTIFRDYTDLIEPLSLDEAFLDVSDAGHFSGSATRIAQDIRRRVSNQLHITVSAGVAPNKFLAKIASDWKKPNGLFVITPDQVEDFVASLPVTKLHGVGKVTADKLGRLGIVDCADLRGRSKLALVREFGSFGERLWSLAHGIDDRPVQNDSRRQSVSVENTYDTDLPDLAACLEKLPALLETLGNRMARMEGQYRPGKPFVKVKFHDFTQTTLEQSGAGRDLGSYEQLLAQAFARGAKPVRLLGIGVRLHDLRAAHEQLELFSQ.

A UmuC domain is found at 6-187 (IIHIDCDCFY…LPVTKLHGVG (182 aa)). Mg(2+) contacts are provided by Asp-10 and Asp-105. Glu-106 is an active-site residue.

It belongs to the DNA polymerase type-Y family. Monomer. Mg(2+) serves as cofactor.

It localises to the cytoplasm. The catalysed reaction is DNA(n) + a 2'-deoxyribonucleoside 5'-triphosphate = DNA(n+1) + diphosphate. Functionally, poorly processive, error-prone DNA polymerase involved in untargeted mutagenesis. Copies undamaged DNA at stalled replication forks, which arise in vivo from mismatched or misaligned primer ends. These misaligned primers can be extended by PolIV. Exhibits no 3'-5' exonuclease (proofreading) activity. May be involved in translesional synthesis, in conjunction with the beta clamp from PolIII. The sequence is that of DNA polymerase IV from Pseudomonas savastanoi pv. phaseolicola (strain 1448A / Race 6) (Pseudomonas syringae pv. phaseolicola (strain 1448A / Race 6)).